A 284-amino-acid chain; its full sequence is uncharacterized protein (284 aa).

2 stretches are compositionally biased toward low complexity: residues 110-123 (NGPR…PNNG) and 130-149 (NGPM…NGPN). The segment at 110–176 (NGPRGRQMNG…PNEFDSDDDD (67 aa)) is disordered.

The protein resides in the virion. This is an uncharacterized protein from Acanthamoeba polyphaga mimivirus (APMV).